A 146-amino-acid polypeptide reads, in one-letter code: 3-dehydroquinate dehydratase (146 aa).

The active-site Proton acceptor is the Tyr22. Residues Asn73, His79, and Asp86 each coordinate substrate. His99 acts as the Proton donor in catalysis. Substrate is bound by residues 100-101 and Arg110; that span reads VS.

Belongs to the type-II 3-dehydroquinase family. In terms of assembly, homododecamer.

It catalyses the reaction 3-dehydroquinate = 3-dehydroshikimate + H2O. It functions in the pathway metabolic intermediate biosynthesis; chorismate biosynthesis; chorismate from D-erythrose 4-phosphate and phosphoenolpyruvate: step 3/7. Its function is as follows. Catalyzes a trans-dehydration via an enolate intermediate. This is 3-dehydroquinate dehydratase from Kineococcus radiotolerans (strain ATCC BAA-149 / DSM 14245 / SRS30216).